The sequence spans 1854 residues: Protein virilizer (1854 aa).

At Ser-186 the chain carries Phosphoserine. 2 stretches are compositionally biased toward basic and acidic residues: residues 202–214 (YHQH…QREM) and 236–259 (THSE…DWSR). Disordered stretches follow at residues 202 to 361 (YHQH…EIIG), 777 to 821 (NPEE…GKPV), 1570 to 1589 (TSTE…ASSC), 1720 to 1788 (VRGR…NRGS), and 1804 to 1854 (IGSP…SYLR). Residues Ser-258, Ser-260, and Ser-276 each carry the phosphoserine modification. Positions 275 to 285 (RSRSVVDEHKW) are enriched in basic and acidic residues. Thr-288 is modified (phosphothreonine). Ser-295 is subject to Phosphoserine. A Phosphothreonine modification is found at Thr-297. Ser-301 and Ser-312 each carry phosphoserine. Basic and acidic residues-rich tracts occupy residues 325-343 (HSSE…EDRS) and 777-796 (NPEE…KAME). A coiled-coil region spans residues 779–808 (EEKEEKAEKSDAEDKAMEVENEAVEAGGEK). Low complexity-rich tracts occupy residues 1738–1748 (SRPPNTSRPPS) and 1816–1838 (SYRS…PHYS).

It belongs to the vir family. As to quaternary structure, component of the WMM complex, a N6-methyltransferase complex composed of a catalytic subcomplex, named MAC, and of an associated subcomplex, named MACOM. The MAC subcomplex is composed of Ime4/Mettl3 and Mettl14. The MACOM subcomplex is composed of fl(2)d, Flacc/Xio, Hakai, vir, and, in some cases of nito. Part of a complex containing fl(2)d, Sxl and vir.

The protein localises to the nucleus. In terms of biological role, associated component of the WMM complex, a complex that mediates N6-methyladenosine (m6A) methylation of mRNAs, a modification that plays a role in the efficiency of mRNA splicing and is required for sex determination. Required for sex determination and dosage compensation via Sxl alternative splicing: m6A methylation acts as a key regulator of Sxl pre-mRNA and promotes female-specific alternative splicing of Sxl, which determines female physiognomy. M6A methylation is also required for neuronal functions. Required for proper inclusion of regulated exons in Ubx transcripts, leading to isoforms Ia/b and IIa/b. The sequence is that of Protein virilizer from Drosophila melanogaster (Fruit fly).